The sequence spans 75 residues: UPF0352 protein YejL (75 aa).

The protein belongs to the UPF0352 family.

The chain is UPF0352 protein YejL from Escherichia coli O139:H28 (strain E24377A / ETEC).